Consider the following 585-residue polypeptide: L-gulonolactone oxidase 3 (585 aa).

A signal peptide spans 1–24 (MRYSHTLQQFSILSFFVTIWTVQS). Residues 51–233 (KTCHAANVTY…SKVKLSIEKA (183 aa)) enclose the FAD-binding PCMH-type domain.

This sequence belongs to the oxygen-dependent FAD-linked oxidoreductase family. FAD is required as a cofactor.

Its subcellular location is the vacuole. The enzyme catalyses L-gulono-1,4-lactone + O2 = L-ascorbate + H2O2 + H(+). Its pathway is cofactor biosynthesis; L-ascorbate biosynthesis. Functionally, catalyzes the oxidation of L-gulono-1,4-lactone to ascorbic acid. L-gulono-1,4-lactone is oxidized to hydrogen peroxide and L-xylo-hexulonolactone which spontaneously isomerizes to L-ascorbate. The chain is L-gulonolactone oxidase 3 from Arabidopsis thaliana (Mouse-ear cress).